We begin with the raw amino-acid sequence, 212 residues long: Uridine kinase (212 aa).

13–20 (GASASGKS) provides a ligand contact to ATP.

It belongs to the uridine kinase family.

The protein resides in the cytoplasm. The catalysed reaction is uridine + ATP = UMP + ADP + H(+). It carries out the reaction cytidine + ATP = CMP + ADP + H(+). Its pathway is pyrimidine metabolism; CTP biosynthesis via salvage pathway; CTP from cytidine: step 1/3. It participates in pyrimidine metabolism; UMP biosynthesis via salvage pathway; UMP from uridine: step 1/1. This chain is Uridine kinase, found in Shewanella oneidensis (strain ATCC 700550 / JCM 31522 / CIP 106686 / LMG 19005 / NCIMB 14063 / MR-1).